A 318-amino-acid chain; its full sequence is 2,4-dinitroanisole O-demethylase subunit beta (318 aa).

It belongs to the metallo-beta-lactamase superfamily. In terms of assembly, part of the complex DnhAB composed of the 2,4-dinitroanisole O-demethylase alpha (DnhA) and beta (DnhB) subunits.

It catalyses the reaction 2,4-dinitroanisole + H2O = 2,4-dinitrophenol + methanol + H(+). In terms of biological role, involved in the degradation of 2,4-dinitroanisole (DNAN), an insensitive munition ingredient used in explosive formulations as a replacement for 2,4,6-trinitrotoluene (TNT). Catalyzes the removal of the methyl group from 2,4-dinitroanisole (DNAN) to yield 2,4-dinitrophenol (2,4-DNP) and methanol. This Nocardioides sp. (strain JS1661) protein is 2,4-dinitroanisole O-demethylase subunit beta.